The chain runs to 137 residues: Large ribosomal subunit protein uL16 (137 aa).

Belongs to the universal ribosomal protein uL16 family. Part of the 50S ribosomal subunit.

Its function is as follows. Binds 23S rRNA and is also seen to make contacts with the A and possibly P site tRNAs. This Anaplasma phagocytophilum (strain HZ) protein is Large ribosomal subunit protein uL16.